The primary structure comprises 229 residues: Potassium/proton antiporter CemA (229 aa).

A run of 4 helical transmembrane segments spans residues 7-27, 114-134, 154-174, and 189-209; these read FTPL…SLSF, LICF…LLIL, ILLL…ELMI, and IISG…KYWI.

Belongs to the CemA family.

It is found in the plastid. The protein localises to the chloroplast inner membrane. The catalysed reaction is K(+)(in) + H(+)(out) = K(+)(out) + H(+)(in). Functionally, contributes to K(+)/H(+) antiport activity by supporting proton efflux to control proton extrusion and homeostasis in chloroplasts in a light-dependent manner to modulate photosynthesis. Prevents excessive induction of non-photochemical quenching (NPQ) under continuous-light conditions. Indirectly promotes efficient inorganic carbon uptake into chloroplasts. The chain is Potassium/proton antiporter CemA from Gossypium barbadense (Sea Island cotton).